Consider the following 571-residue polypeptide: Urease subunit alpha (571 aa).

The 438-residue stretch at 134 to 571 (GAIDTHIHFI…LPMAQRYFLF (438 aa)) folds into the Urease domain. Ni(2+)-binding residues include histidine 139, histidine 141, and lysine 222. An N6-carboxylysine modification is found at lysine 222. Position 224 (histidine 224) interacts with substrate. The Ni(2+) site is built by histidine 251 and histidine 277. Histidine 325 (proton donor) is an active-site residue. Aspartate 365 is a Ni(2+) binding site.

It belongs to the metallo-dependent hydrolases superfamily. Urease alpha subunit family. As to quaternary structure, heterotrimer of UreA (gamma), UreB (beta) and UreC (alpha) subunits. Three heterotrimers associate to form the active enzyme. The cofactor is Ni cation. Carboxylation allows a single lysine to coordinate two nickel ions.

The protein localises to the cytoplasm. It catalyses the reaction urea + 2 H2O + H(+) = hydrogencarbonate + 2 NH4(+). It functions in the pathway nitrogen metabolism; urea degradation; CO(2) and NH(3) from urea (urease route): step 1/1. This Bordetella parapertussis (strain 12822 / ATCC BAA-587 / NCTC 13253) protein is Urease subunit alpha.